The sequence spans 427 residues: Transcobalamin-2 (427 aa).

The signal sequence occupies residues 1–18; the sequence is MRHLGALLFLLGVLGALA. 3 cysteine pairs are disulfide-bonded: Cys-21/Cys-267, Cys-116/Cys-309, and Cys-165/Cys-205. Cob(II)alamin contacts are provided by residues Gln-104, 152-156, His-190, 190-194, Asn-242, Ser-245, Gln-291, and 395-397; these read TSYYQ, HHSVD, and WQL.

It belongs to the eukaryotic cobalamin transport proteins family. Interacts with CD320 (via LDL-receptor class A domains).

The protein resides in the secreted. Functionally, primary vitamin B12-binding and transport protein. Delivers cobalamin to cells. The protein is Transcobalamin-2 (TCN2) of Pongo abelii (Sumatran orangutan).